We begin with the raw amino-acid sequence, 773 residues long: Endonuclease MutS2 (773 aa).

An ATP-binding site is contributed by 334–341 (GANAGGKT). A Smr domain is found at 698 to 773 (VDLRGMRADV…GDGMTMVTLK (76 aa)).

The protein belongs to the DNA mismatch repair MutS family. MutS2 subfamily. Homodimer. Binds to stalled ribosomes, contacting rRNA.

Its function is as follows. Endonuclease that is involved in the suppression of homologous recombination and thus may have a key role in the control of bacterial genetic diversity. Acts as a ribosome collision sensor, splitting the ribosome into its 2 subunits. Detects stalled/collided 70S ribosomes which it binds and splits by an ATP-hydrolysis driven conformational change. Acts upstream of the ribosome quality control system (RQC), a ribosome-associated complex that mediates the extraction of incompletely synthesized nascent chains from stalled ribosomes and their subsequent degradation. Probably generates substrates for RQC. The sequence is that of Endonuclease MutS2 from Solidesulfovibrio magneticus (strain ATCC 700980 / DSM 13731 / RS-1) (Desulfovibrio magneticus).